A 172-amino-acid chain; its full sequence is Achaete-scute homolog 4 (172 aa).

A bHLH domain is found at 72 to 124; sequence AFLRKRNERERQRVRCVNEGYARLRDHLPRELADKRLSKVETLRAAIDYIKHL. Positions 144–172 are disordered; the sequence is QRRAECNSDGESKASSAPSPSSEPEEGGS. The span at 145 to 155 shows a compositional bias: basic and acidic residues; the sequence is RRAECNSDGES. The segment covering 156-165 has biased composition (low complexity); that stretch reads KASSAPSPSS.

Expressed in skin. 7-fold higher expression in fetal skin than in adult skin. Weak expression also detected in fetal lung, aorta and brain, and in adult stomach, kidney, ovary and breast.

It is found in the nucleus. Its function is as follows. Could be a transcriptional regulator involved in skin development. This Homo sapiens (Human) protein is Achaete-scute homolog 4 (ASCL4).